Reading from the N-terminus, the 532-residue chain is MDITTTEIYHDGHHTPHGWRRWLFSTNHKDIGIMYIIFAVFAGIVGGLFSLLFRLELAMPGGTFLNHDFQLYNVLITAHAVIMVFFMIMPALFGGFGNYFVPLLIGAPDMAFPRLNNISFWLLVPAFLLLMGSAFVDGGPGTGWTLYPPLSNLSGHPGAAVDMAIFSLHLTGLSSILGSINLIVTIFNMRAPGMGLFKMPLFVWSILVTAFLIILAMPVLGGAITMLLTDRNFGTTFFKPDGGGDPVLFQHLFWFFGHPEVYIVILPGFGIVSQVISTFSRKPIFGYQGMIGAMVIIGFVGFIVWAHHMFTVGLSYNALIYFTAGTMIIAVPTGIKIFSWIATMWGGSITFPTPMLFSIGFIILFTIGGVTGIILSNSALDRVLHDTYYVVAHFHYTMSLGALFTAFAGFYYWFGKISGKQYPDILGKIHFWITFIGVNLTFFPQHFLGLAGMPRRIPDYPEAFAGWNMVSSIGAGISMFAALYFVFIVFYTLKYGKDCPNNPWGEGADTLEWTLTSPPPFHTFETPPHIEG.

8 consecutive transmembrane segments (helical) span residues 33–53 (IMYIIFAVFAGIVGGLFSLLF), 74–94 (VLITAHAVIMVFFMIMPALFG), 95–115 (GFGNYFVPLLIGAPDMAFPRL), 118–138 (ISFWLLVPAFLLLMGSAFVDG), 163–183 (MAIFSLHLTGLSSILGSINLI), 200–220 (PLFVWSILVTAFLIILAMPVL), 252–272 (LFWFFGHPEVYIVILPGFGIV), and 284–304 (IFGYQGMIGAMVIIGFVGFIV). Residue histidine 79 participates in Fe(II)-heme a binding. Cu cation contacts are provided by histidine 258 and tyrosine 262. Positions 307 and 308 each coordinate Cu cation. 2 helical membrane-spanning segments follow: residues 318-338 (ALIYFTAGTMIIAVPTGIKIF) and 355-375 (MLFSIGFIILFTIGGVTGIIL). Histidine 393 is a heme a3 binding site. Helical transmembrane passes span 394–414 (FHYTMSLGALFTAFAGFYYWF), 431–451 (FWITFIGVNLTFFPQHFLGLA), and 473–493 (IGAGISMFAALYFVFIVFYTL). Histidine 395 lines the Fe(II)-heme a pocket.

This sequence belongs to the heme-copper respiratory oxidase family.

The protein localises to the cell membrane. It carries out the reaction 4 Fe(II)-[cytochrome c] + O2 + 8 H(+)(in) = 4 Fe(III)-[cytochrome c] + 2 H2O + 4 H(+)(out). Its pathway is energy metabolism; oxidative phosphorylation. Cytochrome c oxidase is the component of the respiratory chain that catalyzes the reduction of oxygen to water. Subunits 1-3 form the functional core of the enzyme complex. CO I is the catalytic subunit of the enzyme. Electrons originating in cytochrome c are transferred via the copper A center of subunit 2 and heme A of subunit 1 to the bimetallic center formed by heme A3 and copper B. This Rickettsia conorii (strain ATCC VR-613 / Malish 7) protein is Probable cytochrome c oxidase subunit 1 (ctaD).